Consider the following 486-residue polypeptide: Amyloid-beta A4 precursor protein-binding family B member 3 (486 aa).

A WW domain is found at 29–61; that stretch reads TGLPPGWRKIRDAAGTYYWHVPSGSTQWQRPTW. 2 PID domains span residues 113–280 and 285–440; these read EPGA…QVEL and SQAA…RTSS. The segment at 438–460 is disordered; it reads TSSMDSPGGPLPPPLLKGGAGGA.

As to quaternary structure, interacts with APP (via intracellular domain). Interacts with APLP1 and APLP2 (via intracellular domain).

The protein resides in the cytoplasm. Its subcellular location is the nucleus. May modulate the internalization of amyloid-beta precursor protein. This is Amyloid-beta A4 precursor protein-binding family B member 3 from Mus musculus (Mouse).